We begin with the raw amino-acid sequence, 316 residues long: Probable cell division protein WhiA (316 aa).

The H-T-H motif DNA-binding region spans 276-309; sequence SLEELGKIAEPQITKDAIAGRIRRLLQLAEKTEK.

Belongs to the WhiA family.

In terms of biological role, involved in cell division and chromosome segregation. The polypeptide is Probable cell division protein WhiA (Bifidobacterium longum (strain NCC 2705)).